Here is a 320-residue protein sequence, read N- to C-terminus: Ferrochelatase (320 aa).

Positions 194 and 275 each coordinate Fe cation.

It belongs to the ferrochelatase family.

It localises to the cytoplasm. It catalyses the reaction heme b + 2 H(+) = protoporphyrin IX + Fe(2+). The protein operates within porphyrin-containing compound metabolism; protoheme biosynthesis; protoheme from protoporphyrin-IX: step 1/1. Functionally, catalyzes the ferrous insertion into protoporphyrin IX. This is Ferrochelatase from Cronobacter sakazakii (strain ATCC BAA-894) (Enterobacter sakazakii).